The primary structure comprises 347 residues: Neutral protease 2 homolog MGG_10927 (347 aa).

The signal sequence occupies residues 1-19 (MKYSVGITALLATLAQGAA). A propeptide spanning residues 20 to 176 (VMSKRDIPLD…RSYLAKRTMV (157 aa)) is cleaved from the precursor. 2 cysteine pairs are disulfide-bonded: Cys-180–Cys-250 and Cys-257–Cys-275. Zn(2+) is bound at residue His-299. Glu-300 is a catalytic residue. His-303 lines the Zn(2+) pocket.

This sequence belongs to the peptidase M35 family. Zn(2+) serves as cofactor.

It localises to the secreted. The catalysed reaction is Preferential cleavage of bonds with hydrophobic residues in P1'. Also 3-Asn-|-Gln-4 and 8-Gly-|-Ser-9 bonds in insulin B chain.. In terms of biological role, secreted metalloproteinase that allows assimilation of proteinaceous substrates. Shows high activities on basic nuclear substrates such as histone and protamine. The sequence is that of Neutral protease 2 homolog MGG_10927 from Pyricularia oryzae (strain 70-15 / ATCC MYA-4617 / FGSC 8958) (Rice blast fungus).